Reading from the N-terminus, the 130-residue chain is kinetoplast-associated protein 2-2 (130 aa).

Positions Met1–Ala10 are excised as a propeptide. The tract at residues Glu95–Lys130 is disordered. Positions Lys103–Lys130 are enriched in basic residues.

Belongs to the KAP family. As to quaternary structure, associates with the kinetoplast DNA network.

It localises to the mitochondrion matrix. The protein resides in the kinetoplast. Histone H1-like DNA-binding protein involved in the organization and segregation of kinetoplast DNA (kDNA). The mitochondrial DNA of kinetoplastid protozoa consists of about 5,000 minicircles and 20 to 30 maxicircles. These circular DNAs are held together by catenation into a highly organized compact disk structure referred to as a kinetoplast DNA (kDNA) network. Binds preferentially to a specific fragment of minicircle DNA and is able to compact kDNA networks through DNA charge neutralization and condensation. This Crithidia fasciculata protein is kinetoplast-associated protein 2-2 (KAP2-2).